A 128-amino-acid chain; its full sequence is Large ribosomal subunit protein bL12 (128 aa).

It belongs to the bacterial ribosomal protein bL12 family. As to quaternary structure, homodimer. Part of the ribosomal stalk of the 50S ribosomal subunit. Forms a multimeric L10(L12)X complex, where L10 forms an elongated spine to which 2 to 4 L12 dimers bind in a sequential fashion. Binds GTP-bound translation factors.

Its function is as follows. Forms part of the ribosomal stalk which helps the ribosome interact with GTP-bound translation factors. Is thus essential for accurate translation. This chain is Large ribosomal subunit protein bL12, found in Methylobacillus flagellatus (strain ATCC 51484 / DSM 6875 / VKM B-1610 / KT).